We begin with the raw amino-acid sequence, 305 residues long: HTH-type transcriptional regulator KdgR (305 aa).

The HTH iclR-type domain maps to 55–116; the sequence is VSSVLKVFGI…GESEKYSLTL (62 aa). A DNA-binding region (H-T-H motif) is located at residues 76–95; the sequence is ITELSQRVMMSKSTVYRFLQ. Residues 131–300 form the IclR-ED domain; sequence LIRSADIQMR…ARNISDQMGY (170 aa).

As to quaternary structure, homodimer.

Its subcellular location is the cytoplasm. Transcriptional repressor that negatively regulates the expression of genes involved in pectinolysis and in pectinase secretion. Controls genes involved in pectin catabolism, including the pectinase genes (pelA, pelB, pelC, pelE), genes involved in pectin catabolism (kdgT, ogl, kduI-kdgF) and the outT gene involved in pectinase secretion. Acts by binding directly to KdgR binding sites (KdgR-box) in the gene operator/promoter region. This Dickeya chrysanthemi (Pectobacterium chrysanthemi) protein is HTH-type transcriptional regulator KdgR.